A 374-amino-acid chain; its full sequence is Tomoregulin-2 (374 aa).

The signal sequence occupies residues M1–A40. The Extracellular portion of the chain corresponds to F41–V320. 2 Kazal-like domains span residues V90–T137 and V181–D229. 6 disulfides stabilise this stretch: C91-C121, C95-C114, C103-C135, C182-C213, C186-C206, and C195-C227. A glycan (N-linked (GlcNAc...) (complex) asparagine; atypical) is linked at N204. The N-linked (GlcNAc...) asparagine glycan is linked to N230. Residues H261–E301 enclose the EGF-like domain. Intrachain disulfides connect C265/C278, C273/C289, and C291/C300. Residues K303–V320 form a required for shedding region. The chain crosses the membrane as a helical span at residues L321–I341. Residues T342–I374 are Cytoplasmic-facing. Residues R353–I374 form a disordered region. Over residues Q356–I374 the composition is skewed to polar residues.

Belongs to the tomoregulin family. O-glycosylated; contains chondroitin sulfate glycosaminoglycans. Post-translationally, a soluble form (TMEFF2-ECD) is produced by proteolytic shedding. This shedding can be induced by phorbol ester or pro-inflammatory cytokines such as TNFalpha, and is mediated by ADAM17. Highly expressed in adult and fetal brain, spinal cord and prostate. Expressed in all brain regions except the pituitary gland, with highest levels in amygdala and corpus callosum. Expressed in the pericryptal myofibroblasts and other stromal cells of normal colonic mucosa. Expressed in prostate carcinoma. Down-regulated in colorectal cancer. Present in Alzheimer disease plaques (at protein level). Isoform 3 is expressed weakly in testis and at high levels in normal and cancerous prostate.

Its subcellular location is the membrane. It localises to the secreted. May be a survival factor for hippocampal and mesencephalic neurons. The shedded form up-regulates cancer cell proliferation, probably by promoting ERK1/2 phosphorylation. The sequence is that of Tomoregulin-2 (TMEFF2) from Homo sapiens (Human).